A 176-amino-acid chain; its full sequence is Putative REP-associated tyrosine transposase (176 aa).

Mg(2+)-binding residues include histidine 59 and histidine 61. Tyrosine 148 (nucleophile) is an active-site residue.

Belongs to the transposase 17 family. RAYT subfamily. In terms of assembly, homodimer. Mg(2+) serves as cofactor.

Functionally, transposase responsible for transposition an insertion sequence (IS) element. Transposition occurs in 2 main steps, excision from the donor DNA 'top strand' into a single strand circle and its subsequent reinsertion into the DNA target. This increases the copy number of the IS. This chain is Putative REP-associated tyrosine transposase, found in Haemophilus influenzae (strain ATCC 51907 / DSM 11121 / KW20 / Rd).